Here is a 1762-residue protein sequence, read N- to C-terminus: Kinase D-interacting substrate of 220 kDa (1762 aa).

Residues 1–508 (MSVLISQSVI…WLIVFLTLLL (508 aa)) are Cytoplasmic-facing. ANK repeat units lie at residues 45-74 (AAEQGNVEIVKELLKNGANCNLEDLDNWTA), 78-107 (ASKEGHIHIVEELLKSGASLEHRDMGGWTA), 111-140 (ACYKGRTDVVELLLSHGANPSVTGLYSVYP), 145-174 (AGRGHADIVHLLLQNGAKVNCSDKYGTTPL), 178-207 (ARKGHLECVKHLLAMGADVDQEGANSMTAL), 211-240 (VKGGYTQSVKEILKRNPNVNLTDKDGNTAL), 244-273 (SKEGHIEIVQDLLDAGTYVNIPDRSGDTVL), 277-306 (VRGGHVEIVRALLQKYADIDIRGQDNKTAL), 310-339 (VEKGNATMVRDILQCNPDTEICTKDGETPL), 343-372 (TKMRNIEVVELLLDKGAKVSAVDKKGDTPL), and 376-405 (IRGRSRRLAELLLRNPKDGRLLYRPNKAGE). Residues 440 to 953 (YDLYSSALAD…NIVSVTGRLL (514 aa)) enclose the KAP NTPase domain. A helical transmembrane segment spans residues 509–529 (CGGLGLVFAFTVDTNLAIAIS). Topologically, residues 530–533 (LSFL) are extracellular. The chain crosses the membrane as a helical span at residues 534 to 554 (ALIYIFFIVIYFGGRREGESW). At 555–668 (NWAWALSTRL…SFVIFLFIVG (114 aa)) the chain is on the cytoplasmic side. A helical transmembrane segment spans residues 669-689 (CIIAGITLLAIFRVDPKHLTV). Residues 690–696 (NAILISI) are Extracellular-facing. The chain crosses the membrane as a helical span at residues 697-717 (ASVVGLAFVLNCRTWWQVLDS). Residues 718 to 1680 (LLNSQRKRLH…TPSTVTLNNN (963 aa)) are Cytoplasmic-facing. Serine 882 and serine 885 each carry phosphoserine. At threonine 914 the chain carries Phosphothreonine. Serine 918 carries the post-translational modification Phosphoserine; by PKD. The tract at residues 1089-1092 (PRPP) is mediates interaction with CRKL. Residues serine 1163, serine 1288, serine 1344, serine 1351, serine 1353, serine 1354, and serine 1357 each carry the phosphoserine modification. Disordered stretches follow at residues 1279–1305 (DPRFLNENSSAPVPHGESARRSSHTEL), 1336–1358 (RHSNLSWQSQTRRTPSLSSLNSQ), 1390–1440 (EGGT…DGRK), and 1452–1556 (YSSS…EPIR). A compositionally biased stretch (polar residues) spans 1338–1350 (SNLSWQSQTRRTP). The span at 1395–1422 (SSTISGRSSPHSTYYIGQSSSGGSIHST) shows a compositional bias: low complexity. The span at 1423–1440 (LEQERGKEGELKQEDGRK) shows a compositional bias: basic and acidic residues. The segment covering 1452–1462 (YSSSGVSTNEA) has biased composition (polar residues). Phosphoserine occurs at positions 1513, 1518, 1547, and 1566. Residues 1514–1524 (DEDESGTEESD) show a composition bias toward acidic residues. The span at 1529 to 1553 (LKDDKDKKAEGKAERVCKSPEHSAE) shows a compositional bias: basic and acidic residues. Positions 1571–1628 (DKKDSSDSGVRSNESSPNHSLHNEAADDSQLEKANLIELEDEGHSGKRGMPHSLSGLQ) are disordered. A compositionally biased stretch (polar residues) spans 1579–1590 (GVRSNESSPNHS). A phosphoserine mark is found at serine 1615 and serine 1625. Threonine 1671 carries the phosphothreonine modification. Phosphoserine is present on serine 1673. Threonine 1676 is modified (phosphothreonine). The tract at residues 1704–1762 (ILRPGPSPNPTAVQNENLKSMAHKRSQRSSYTRLSKDASELHAASSESTGFGEERESIL) is disordered. A PDZ-binding motif is present at residues 1757–1762 (ERESIL).

In terms of assembly, found in a complex, at least composed of KIDINS220, MAGI2, NTRK1 and RAPGEF2; the complex is mainly formed at late endosomes in a nerve growth factor (NGF)-dependent manner. Interacts with RAPGEF2; the interaction is strengthened after NGF stimulation. Isoform 2 interacts (via C-terminal domain) with MAGI2 isoform 1 (via PDZ domain). Interacts with NTRK1, NTRK2, NTRK3, ERKL and NGFR. Can form a ternary complex with NGFR and NTRK1 and this complex is affected by the expression levels of KIDINS220/ARMS. An increase in KIDINS220/ARMS expression leads to a decreased association of NGFR and NTRK1. Interacts (via PDZ-binding motif) with SNTA1 and SNTB2 (via PDZ domains). Interacts with EPHA4 and PRKD1. In terms of processing, tyrosine phosphorylated by NTRK1, NTRK2, EPHB2 and EPHA4. Phosphorylation at Ser-918 is induced by phorbol ester treatment. Phosphorylation by NTRK2 is induced by brain-derived neurotrophic factor (BDNF) and neurotrophin-4/5. Phosphorylation by NTRK1 is induced by nerve growth factor (NGF). In terms of tissue distribution, expressed in developing nervous system and in highly plastic areas of the adult brain. Also expressed in neuroendocrine cells, where it concentrates at the tip of neurites. Expressed in developing muscle and is concentrated at the neuromuscular junction (NMS). SNTA1 can regulate its localization in the NMS.

The protein resides in the membrane. Its subcellular location is the late endosome. Promotes a prolonged MAP-kinase signaling by neurotrophins through activation of a Rap1-dependent mechanism. Provides a docking site for the CRKL-C3G complex, resulting in Rap1-dependent sustained ERK activation. May play an important role in regulating postsynaptic signal transduction through the syntrophin-mediated localization of receptor tyrosine kinases such as EPHA4. In cooperation with SNTA1 can enhance EPHA4-induced JAK/STAT activation. Plays a role in nerve growth factor (NGF)-induced recruitment of RAPGEF2 to late endosomes and neurite outgrowth. May play a role in neurotrophin- and ephrin-mediated neuronal outgrowth and in axon guidance during neural development and in neuronal regeneration. The protein is Kinase D-interacting substrate of 220 kDa (Kidins220) of Rattus norvegicus (Rat).